A 107-amino-acid polypeptide reads, in one-letter code: Parvalbumin beta 2 (107 aa).

N-acetylserine is present on serine 1. 2 EF-hand domains span residues 37 to 72 (XSPD…FSAS) and 89 to 107 (DADG…LVKQ). Ca(2+)-binding residues include aspartate 50, aspartate 52, serine 54, phenylalanine 56, glutamate 58, glutamate 61, aspartate 89, aspartate 91, aspartate 93, methionine 95, and glutamate 100.

This sequence belongs to the parvalbumin family.

In terms of biological role, in muscle, parvalbumin is thought to be involved in relaxation after contraction. It binds two calcium ions. This chain is Parvalbumin beta 2, found in Oncorhynchus mykiss (Rainbow trout).